Here is a 123-residue protein sequence, read N- to C-terminus: Large ribosomal subunit protein uL18 (123 aa).

Belongs to the universal ribosomal protein uL18 family. As to quaternary structure, part of the 50S ribosomal subunit; part of the 5S rRNA/L5/L18/L25 subcomplex. Contacts the 5S and 23S rRNAs.

Functionally, this is one of the proteins that bind and probably mediate the attachment of the 5S RNA into the large ribosomal subunit, where it forms part of the central protuberance. This Symbiobacterium thermophilum (strain DSM 24528 / JCM 14929 / IAM 14863 / T) protein is Large ribosomal subunit protein uL18.